The following is a 391-amino-acid chain: F-box/kelch-repeat protein At3g16740 (391 aa).

An F-box domain is found at 1-47; the sequence is MVQISDLPRDLTEEVLSRIPVTSMRAVRFTCKKWNTLSKDRSFTKKH. Kelch repeat units follow at residues 104–154 and 163–215; these read KIFH…YEEK and ILRF…LKGN.

In terms of assembly, part of a SCF (ASK-cullin-F-box) protein ligase complex. Interacts with ASK11.

The protein resides in the nucleus. It participates in protein modification; protein ubiquitination. Functionally, component of SCF(ASK-cullin-F-box) E3 ubiquitin ligase complexes, which may mediate the ubiquitination and subsequent proteasomal degradation of target proteins. This chain is F-box/kelch-repeat protein At3g16740, found in Arabidopsis thaliana (Mouse-ear cress).